The following is a 167-amino-acid chain: uncharacterized protein (167 aa).

The region spanning 9–167 is the N-acetyltransferase domain; sequence PVMRRLTLQD…DCEVRMLREL (159 aa).

Belongs to the acetyltransferase family.

This is an uncharacterized protein from Escherichia coli (strain K12).